The sequence spans 72 residues: uncharacterized protein (72 aa).

The interval 1–53 is disordered; the sequence is MTNEPSTSTPTSTSTSTSTSTSTSTTTLTSTSSTPTSTSTSTSTSTSTSTSTS.

This is an uncharacterized protein from Dictyostelium discoideum (Social amoeba).